We begin with the raw amino-acid sequence, 203 residues long: ATP-dependent Clp protease proteolytic subunit (203 aa).

The active-site Nucleophile is the serine 107. Histidine 132 is a catalytic residue.

Belongs to the peptidase S14 family. Fourteen ClpP subunits assemble into 2 heptameric rings which stack back to back to give a disk-like structure with a central cavity, resembling the structure of eukaryotic proteasomes.

The protein resides in the cytoplasm. The catalysed reaction is Hydrolysis of proteins to small peptides in the presence of ATP and magnesium. alpha-casein is the usual test substrate. In the absence of ATP, only oligopeptides shorter than five residues are hydrolyzed (such as succinyl-Leu-Tyr-|-NHMec, and Leu-Tyr-Leu-|-Tyr-Trp, in which cleavage of the -Tyr-|-Leu- and -Tyr-|-Trp bonds also occurs).. In terms of biological role, cleaves peptides in various proteins in a process that requires ATP hydrolysis. Has a chymotrypsin-like activity. Plays a major role in the degradation of misfolded proteins. This chain is ATP-dependent Clp protease proteolytic subunit, found in Shewanella halifaxensis (strain HAW-EB4).